The sequence spans 98 residues: C-X-C motif chemokine 10 (98 aa).

The first 21 residues, 1 to 21, serve as a signal peptide directing secretion; sequence MNQTAILICCLVFLTLSGIQG. Residue Arg26 is modified to Citrulline. Cystine bridges form between Cys30–Cys57 and Cys32–Cys74.

Belongs to the intercrine alpha (chemokine CxC) family.

Its subcellular location is the secreted. Functionally, chemotactic for monocytes and T-lymphocytes. Binds to CXCR3. The chain is C-X-C motif chemokine 10 (CXCL10) from Macaca nemestrina (Pig-tailed macaque).